The sequence spans 262 residues: Putative hydro-lyase Cbei_2760 (262 aa).

This sequence belongs to the D-glutamate cyclase family.

This chain is Putative hydro-lyase Cbei_2760, found in Clostridium beijerinckii (strain ATCC 51743 / NCIMB 8052) (Clostridium acetobutylicum).